A 184-amino-acid chain; its full sequence is Cathelicidin-related peptide Pt_CRAMP1 (184 aa).

Residues 1–22 (MEGFFWKTWLVVAAFAIGGTSS) form the signal peptide. Positions 23 to 150 (LPHKPLTYEE…EDEKDQPRRV (128 aa)) are excised as a propeptide. 2 cysteine pairs are disulfide-bonded: cysteine 81/cysteine 92 and cysteine 103/cysteine 120. The span at 125–144 (EDEEQNQEEEEEEEKEEDEK) shows a compositional bias: acidic residues. The disordered stretch occupies residues 125-147 (EDEEQNQEEEEEEEKEEDEKDQP).

Belongs to the cathelicidin family. As to expression, expressed by the venom gland.

It localises to the secreted. The protein localises to the target cell membrane. Its function is as follows. Potent antimicrobial peptide against Gram-negative (MIC=2 ug/ml against E.coli ATCC 25922, MIC=8 ug/ml against P.aeruginosa) and Gram-positive bacteria (MIC=32 ug/ml against E.faecalis, MIC=32 ug/ml against S.aureus). Adopts an amphipathic alpha helical conformation, that may allow to partition into the target membrane. High hemolytic activities have been observed on mammalian cells. The polypeptide is Cathelicidin-related peptide Pt_CRAMP1 (Pseudonaja textilis (Eastern brown snake)).